An 87-amino-acid chain; its full sequence is A-agglutinin-binding subunit (87 aa).

A signal peptide spans 1–18 (MQLLRCFSIFSVIASVLA). O-linked (Man...) threonine glycosylation occurs at Thr22. Ser30 carries an O-linked (Man...) serine glycan. O-linked (Man...) threonine glycosylation is present at Thr32. A glycan (O-linked (Man...) serine) is linked at Ser39. O-linked (Man...) threonine glycosylation is present at Thr63. Ser66 is a glycosylation site (O-linked (Man...) serine). O-linked (Man...) threonine glycosylation occurs at Thr75.

Heterodimer; disulfide-linked. Interacts with SAG1.

Functionally, receptor binding subunit of the a-agglutinin heterodimer. S.cerevisiae a and alpha cells express the complementary cell surface glycoproteins a-agglutinin and alpha-agglutinin, respectively, which interact with one another to promote cellular aggregation during mating. This chain is A-agglutinin-binding subunit (AGA2), found in Saccharomyces cerevisiae (strain ATCC 204508 / S288c) (Baker's yeast).